Consider the following 125-residue polypeptide: Putative zinc finger A20 and AN1 domain-containing stress-associated protein 8 (125 aa).

Residues 2-36 (TGEPSLCIRGCGFFSTSQTKNLCSKCYNDFLKDES) form an A20-type zinc finger. Residues C8, C12, C24, C27, C80, C82, H96, and C98 each coordinate Zn(2+). An AN1-type; degenerate zinc finger spans residues 61-106 (LGSKGGCACKKKVGLLGFHCRCGHLFFASHRYPEEHSCPSDYKSAA).

Its function is as follows. May be involved in environmental stress response. The protein is Putative zinc finger A20 and AN1 domain-containing stress-associated protein 8 (SAP8) of Arabidopsis thaliana (Mouse-ear cress).